Here is a 1084-residue protein sequence, read N- to C-terminus: MPRRKQQAPRRSAAYVPEEELKAAEIDEEHAEDGGLSLDIQESEFACNEETEIKEAQSYQNSPVSTATNQDAGYGSPFSEGSDQLAHFKSSSSREEKEESQCPDSVSYPQDSLAQIKAVYANLFSESCWSSLALDLKKSNSATSNNDASQKESSTPTPTPPTSTASTACTTATTAITSCSTSTSHSSTTSNSSSSGYDWHQAALAKTLQQTSSYGLLPEPSLFSTVQLYRQNNKLYGSVFTGASKFRCKDCSAAYDTLVELTVHMNETGHYRDDNRDKDSEKTKRWSKPRKRSLMEMEGKEDAQKVLKCMYCGHSFESLQDLSVHMIKTKHYQKVPLKEPVPAITKLVPSTKKRALQDLASPCSPEPTGVATEVALSESAKDQKTANPYVTPNNRYGYQNGASYTWQFEARKAQILKCMECGSSHDTLQQLTAHMMVTGHFLKVTTSASKKGKQLVLDPVVEEKIQSIPLPPTTHTRLPASSIKKQPDSPAGSVASEEKKEPEKEKEKEKAPPAAGDAERKIKEETEDATEKFEPTALYQYLREEDLDDSPKGGVDILKSLENTVSTAISKAQNGAPSWGGYPSIHAAYQLPGTVKPLQSAVQSVQIQPSYASSVKSLSSTEHNALLHSPGSLTPPPHKSNVSAMEELVEKVTGKVSIKKEERPTEKEKSSPVKAISPVAKENKDLPKTEETGSKPQKKGSDSETGKAKKESTLDAHTPNGTEPLKAKVTNGCGHLGIITDHSPEPSFINPLSALQSIMNTHLGKVSKPVSPSLDPLAMLYKISNSMLDKPVYPTTPAKQADAIDRYYYENSDQPIDLTKSKNKPLVSGVADAVSSPLRESALMDISDMVKNLTGRLTPKSSTPSTVSEKSDADGSSFEEALDELSPVHKRKGRQSNWNPQHLLILQAQFASSLRETAEGKYIMSDLGPQERVHISKFTGLSMTTISHWLANVKYQLRRTGGTKFLKNLDTGHPVFFCNDCASQFRTASTYVSHLETHLGFSLKDLSKLPLSQIQEQQSVVSKALTNKTLGPLGSSEEDLGSTFQCKLCNRTFASKHAVKLHLSKTHGKSPEDHLIYVTELEKQ.

3 disordered regions span residues 49-108, 140-167, and 269-298; these read EETE…SVSY, NSAT…TAST, and GHYR…MEME. Polar residues-rich tracts occupy residues 57-71 and 140-152; these read QSYQ…TNQD and NSAT…SQKE. C2H2-type zinc fingers lie at residues 246 to 270 and 307 to 331; these read FRCK…ETGH and LKCM…KTKH. Over residues 269 to 284 the composition is skewed to basic and acidic residues; that stretch reads GHYRDDNRDKDSEKTK. Residues 416–440 form a C2H2-type 3; atypical zinc finger; sequence LKCMECGSSHDTLQQLTAHMMVTGH. Disordered stretches follow at residues 467–534 and 653–728; these read SIPL…EKFE and TGKV…LKAK. Composition is skewed to basic and acidic residues over residues 496 to 534, 653 to 671, and 681 to 714; these read SEEK…EKFE, TGKV…EKSS, and KENK…ESTL. The residue at position 771 (Ser771) is a Phosphoserine. The segment at 855 to 879 is disordered; the sequence is GRLTPKSSTPSTVSEKSDADGSSFE. The segment covering 859-868 has biased composition (polar residues); the sequence is PKSSTPSTVS. Positions 891 to 961 form a DNA-binding region, homeobox; atypical; the sequence is RKGRQSNWNP…NVKYQLRRTG (71 aa). 2 consecutive C2H2-type zinc fingers follow at residues 976–998 and 1044–1067; these read FFCN…LETH and FQCK…SKTH.

This sequence belongs to the teashirt C2H2-type zinc-finger protein family. In terms of assembly, interacts (via homeobox domain) with APBB1 (via PID domain 1).

It localises to the nucleus. In terms of biological role, probable transcriptional regulator involved in developmental processes. May act as a transcriptional repressor (Potential). In Mus musculus (Mouse), this protein is Teashirt homolog 1 (Tshz1).